A 151-amino-acid chain; its full sequence is Small ribosomal subunit protein uS15z (151 aa).

It belongs to the universal ribosomal protein uS15 family.

This chain is Small ribosomal subunit protein uS15z (RPS13A), found in Arabidopsis thaliana (Mouse-ear cress).